Consider the following 274-residue polypeptide: Undecaprenyl-diphosphatase 1 (274 aa).

7 helical membrane passes run 47-67 (QVFLVVIQLGAILSVVLLYFN), 85-105 (VSMWIKIIISCIPATIVGIPF), 113-133 (FYNYQTVSITLISFGILFIMI), 150-170 (ITYTTAVLIGIFQLIAAVFPG), 196-216 (FFLAIPVMFGASLLKLFKFGL), 225-245 (ILFIGMLSAFIVSILAIKFLM), and 253-273 (FKAFGWYRIILGCAVLVYFLI).

It belongs to the UppP family.

Its subcellular location is the cell membrane. The catalysed reaction is di-trans,octa-cis-undecaprenyl diphosphate + H2O = di-trans,octa-cis-undecaprenyl phosphate + phosphate + H(+). Catalyzes the dephosphorylation of undecaprenyl diphosphate (UPP). Confers resistance to bacitracin. This Clostridium acetobutylicum (strain ATCC 824 / DSM 792 / JCM 1419 / IAM 19013 / LMG 5710 / NBRC 13948 / NRRL B-527 / VKM B-1787 / 2291 / W) protein is Undecaprenyl-diphosphatase 1.